Reading from the N-terminus, the 191-residue chain is Ribonuclease HII (191 aa).

Residues 16-191 form the RNase H type-2 domain; sequence INLIGIDEAG…KLHRKSFKLL (176 aa). A divalent metal cation contacts are provided by Asp22, Glu23, and Asp110.

It belongs to the RNase HII family. It depends on Mn(2+) as a cofactor. Mg(2+) serves as cofactor.

The protein resides in the cytoplasm. The enzyme catalyses Endonucleolytic cleavage to 5'-phosphomonoester.. Functionally, endonuclease that specifically degrades the RNA of RNA-DNA hybrids. The polypeptide is Ribonuclease HII (rnhB) (Campylobacter jejuni subsp. jejuni serotype O:2 (strain ATCC 700819 / NCTC 11168)).